Here is a 258-residue protein sequence, read N- to C-terminus: MMAALREACRSLWIAIGYFTRIPVPASVGFSQDGLNRAARFFPLVGWLVGAAGALAYWLASRTVPAPGVAVAASMAATLLLTGAFHEDGLADCADGFGGGYTAEDRLRIMRDSRIGAFGAIAVCMALLLKWQLLMAMAAQHAAAAMAAMVAAHAASRGMAVSYLLTHDYARMEGKAKPVAQPMGRRDAAWAALFGGLPLLGFGMACAAIAVAVLLAARWALGRYFTRRLGGITGDCLGLAQQVFELLVLWVLLAWTSS.

A run of 6 helical transmembrane segments spans residues 41–61 (FFPL…WLAS), 65–85 (PAPG…TGAF), 115–135 (IGAF…QLLM), 136–156 (AMAA…HAAS), 197–217 (LPLL…LLAA), and 236–256 (CLGL…LAWT).

Belongs to the CobS family. Mg(2+) serves as cofactor.

The protein localises to the cell inner membrane. The enzyme catalyses alpha-ribazole + adenosylcob(III)inamide-GDP = adenosylcob(III)alamin + GMP + H(+). It carries out the reaction alpha-ribazole 5'-phosphate + adenosylcob(III)inamide-GDP = adenosylcob(III)alamin 5'-phosphate + GMP + H(+). The protein operates within cofactor biosynthesis; adenosylcobalamin biosynthesis; adenosylcobalamin from cob(II)yrinate a,c-diamide: step 7/7. In terms of biological role, joins adenosylcobinamide-GDP and alpha-ribazole to generate adenosylcobalamin (Ado-cobalamin). Also synthesizes adenosylcobalamin 5'-phosphate from adenosylcobinamide-GDP and alpha-ribazole 5'-phosphate. The chain is Adenosylcobinamide-GDP ribazoletransferase from Ralstonia nicotianae (strain ATCC BAA-1114 / GMI1000) (Ralstonia solanacearum).